The following is a 144-amino-acid chain: Large ribosomal subunit protein uL16 (144 aa).

This sequence belongs to the universal ribosomal protein uL16 family. As to quaternary structure, part of the 50S ribosomal subunit.

Functionally, binds 23S rRNA and is also seen to make contacts with the A and possibly P site tRNAs. The chain is Large ribosomal subunit protein uL16 from Lactiplantibacillus plantarum (strain ATCC BAA-793 / NCIMB 8826 / WCFS1) (Lactobacillus plantarum).